The following is a 294-amino-acid chain: Ribosomal RNA small subunit methyltransferase A (294 aa).

S-adenosyl-L-methionine is bound by residues Asn29, Val31, Gly56, Glu77, Asp107, and Asn126.

Belongs to the class I-like SAM-binding methyltransferase superfamily. rRNA adenine N(6)-methyltransferase family. RsmA subfamily.

Its subcellular location is the cytoplasm. It carries out the reaction adenosine(1518)/adenosine(1519) in 16S rRNA + 4 S-adenosyl-L-methionine = N(6)-dimethyladenosine(1518)/N(6)-dimethyladenosine(1519) in 16S rRNA + 4 S-adenosyl-L-homocysteine + 4 H(+). In terms of biological role, specifically dimethylates two adjacent adenosines (A1518 and A1519) in the loop of a conserved hairpin near the 3'-end of 16S rRNA in the 30S particle. May play a critical role in biogenesis of 30S subunits. The polypeptide is Ribosomal RNA small subunit methyltransferase A (Mycobacterium sp. (strain MCS)).